The sequence spans 704 residues: Polyribonucleotide nucleotidyltransferase (704 aa).

Asp487 and Asp493 together coordinate Mg(2+). The KH domain maps to 554 to 613 (PRLLTIKIHPDKIREVIGKGGSTIQAITKETGTQIDIQDDGTIIIASVNAIAAQAAKSRI). One can recognise an S1 motif domain in the interval 623 to 691 (GRIYEGKVAK…KQGRIRLSIK (69 aa)).

Belongs to the polyribonucleotide nucleotidyltransferase family. In terms of assembly, component of the RNA degradosome, which is a multiprotein complex involved in RNA processing and mRNA degradation. Requires Mg(2+) as cofactor.

It is found in the cytoplasm. The catalysed reaction is RNA(n+1) + phosphate = RNA(n) + a ribonucleoside 5'-diphosphate. Functionally, involved in mRNA degradation. Catalyzes the phosphorolysis of single-stranded polyribonucleotides processively in the 3'- to 5'-direction. In Xanthomonas campestris pv. campestris (strain B100), this protein is Polyribonucleotide nucleotidyltransferase.